The following is a 283-amino-acid chain: Pantothenate synthetase (283 aa).

33–40 contributes to the ATP binding site; that stretch reads MGALHEGH. H40 serves as the catalytic Proton donor. Q64 lines the (R)-pantoate pocket. Q64 provides a ligand contact to beta-alanine. 150–153 lines the ATP pocket; sequence GEKD. Q156 lines the (R)-pantoate pocket. ATP-binding positions include I179 and 187-190; that span reads MSSR.

It belongs to the pantothenate synthetase family. In terms of assembly, homodimer.

The protein resides in the cytoplasm. It catalyses the reaction (R)-pantoate + beta-alanine + ATP = (R)-pantothenate + AMP + diphosphate + H(+). It participates in cofactor biosynthesis; (R)-pantothenate biosynthesis; (R)-pantothenate from (R)-pantoate and beta-alanine: step 1/1. Catalyzes the condensation of pantoate with beta-alanine in an ATP-dependent reaction via a pantoyl-adenylate intermediate. This Mesorhizobium japonicum (strain LMG 29417 / CECT 9101 / MAFF 303099) (Mesorhizobium loti (strain MAFF 303099)) protein is Pantothenate synthetase.